Here is a 743-residue protein sequence, read N- to C-terminus: Phosphoribosylformylglycinamidine synthase subunit PurL (743 aa).

H54 is a catalytic residue. Positions 57 and 96 each coordinate ATP. E98 is a Mg(2+) binding site. Substrate is bound by residues 99–102 (SHNH) and R121. H100 functions as the Proton acceptor in the catalytic mechanism. D122 serves as a coordination point for Mg(2+). Q245 contacts substrate. D273 is a Mg(2+) binding site. 317 to 319 (ESQ) contacts substrate. 2 residues coordinate ATP: D500 and G537. N538 contributes to the Mg(2+) binding site. A substrate-binding site is contributed by S540.

This sequence belongs to the FGAMS family. As to quaternary structure, monomer. Part of the FGAM synthase complex composed of 1 PurL, 1 PurQ and 2 PurS subunits.

It localises to the cytoplasm. The enzyme catalyses N(2)-formyl-N(1)-(5-phospho-beta-D-ribosyl)glycinamide + L-glutamine + ATP + H2O = 2-formamido-N(1)-(5-O-phospho-beta-D-ribosyl)acetamidine + L-glutamate + ADP + phosphate + H(+). It participates in purine metabolism; IMP biosynthesis via de novo pathway; 5-amino-1-(5-phospho-D-ribosyl)imidazole from N(2)-formyl-N(1)-(5-phospho-D-ribosyl)glycinamide: step 1/2. Part of the phosphoribosylformylglycinamidine synthase complex involved in the purines biosynthetic pathway. Catalyzes the ATP-dependent conversion of formylglycinamide ribonucleotide (FGAR) and glutamine to yield formylglycinamidine ribonucleotide (FGAM) and glutamate. The FGAM synthase complex is composed of three subunits. PurQ produces an ammonia molecule by converting glutamine to glutamate. PurL transfers the ammonia molecule to FGAR to form FGAM in an ATP-dependent manner. PurS interacts with PurQ and PurL and is thought to assist in the transfer of the ammonia molecule from PurQ to PurL. The sequence is that of Phosphoribosylformylglycinamidine synthase subunit PurL from Bacillus pumilus (strain SAFR-032).